Consider the following 208-residue polypeptide: Protein-L-isoaspartate O-methyltransferase (208 aa).

Serine 59 is a catalytic residue.

This sequence belongs to the methyltransferase superfamily. L-isoaspartyl/D-aspartyl protein methyltransferase family.

It localises to the cytoplasm. It catalyses the reaction [protein]-L-isoaspartate + S-adenosyl-L-methionine = [protein]-L-isoaspartate alpha-methyl ester + S-adenosyl-L-homocysteine. Functionally, catalyzes the methyl esterification of L-isoaspartyl residues in peptides and proteins that result from spontaneous decomposition of normal L-aspartyl and L-asparaginyl residues. It plays a role in the repair and/or degradation of damaged proteins. This Yersinia pseudotuberculosis serotype O:1b (strain IP 31758) protein is Protein-L-isoaspartate O-methyltransferase.